The sequence spans 337 residues: Holliday junction branch migration complex subunit RuvB (337 aa).

The segment at Met1–Val20 is disordered. The tract at residues Met1–Tyr181 is large ATPase domain (RuvB-L). ATP-binding positions include Arg21, Gly62, Lys65, Thr66, Thr67, Glu128 to Tyr130, Arg171, Tyr181, and Arg218. Residue Thr66 participates in Mg(2+) binding. The interval Asp182 to Gly252 is small ATPAse domain (RuvB-S). Residues Gln255–Leu337 are head domain (RuvB-H). DNA contacts are provided by Arg310 and Arg315.

The protein belongs to the RuvB family. Homohexamer. Forms an RuvA(8)-RuvB(12)-Holliday junction (HJ) complex. HJ DNA is sandwiched between 2 RuvA tetramers; dsDNA enters through RuvA and exits via RuvB. An RuvB hexamer assembles on each DNA strand where it exits the tetramer. Each RuvB hexamer is contacted by two RuvA subunits (via domain III) on 2 adjacent RuvB subunits; this complex drives branch migration. In the full resolvosome a probable DNA-RuvA(4)-RuvB(12)-RuvC(2) complex forms which resolves the HJ.

The protein resides in the cytoplasm. It catalyses the reaction ATP + H2O = ADP + phosphate + H(+). The RuvA-RuvB-RuvC complex processes Holliday junction (HJ) DNA during genetic recombination and DNA repair, while the RuvA-RuvB complex plays an important role in the rescue of blocked DNA replication forks via replication fork reversal (RFR). RuvA specifically binds to HJ cruciform DNA, conferring on it an open structure. The RuvB hexamer acts as an ATP-dependent pump, pulling dsDNA into and through the RuvAB complex. RuvB forms 2 homohexamers on either side of HJ DNA bound by 1 or 2 RuvA tetramers; 4 subunits per hexamer contact DNA at a time. Coordinated motions by a converter formed by DNA-disengaged RuvB subunits stimulates ATP hydrolysis and nucleotide exchange. Immobilization of the converter enables RuvB to convert the ATP-contained energy into a lever motion, pulling 2 nucleotides of DNA out of the RuvA tetramer per ATP hydrolyzed, thus driving DNA branch migration. The RuvB motors rotate together with the DNA substrate, which together with the progressing nucleotide cycle form the mechanistic basis for DNA recombination by continuous HJ branch migration. Branch migration allows RuvC to scan DNA until it finds its consensus sequence, where it cleaves and resolves cruciform DNA. The protein is Holliday junction branch migration complex subunit RuvB of Methanospirillum hungatei JF-1 (strain ATCC 27890 / DSM 864 / NBRC 100397 / JF-1).